The primary structure comprises 363 residues: Sorting nexin-21 (363 aa).

The span at 1–11 shows a compositional bias: basic residues; the sequence is MASRLLHRLRH. Positions 1–99 are disordered; the sequence is MASRLLHRLR…PPPDGQRSSQ (99 aa). Low complexity predominate over residues 12–28; that stretch reads ALASDGPGEAAAGPEAE. Polar residues predominate over residues 46–56; sequence SRLSGTLSFTS. Residues 57–71 are compositionally biased toward acidic residues; that stretch reads AEDDPDDEDEDDEAG. The region spanning 119 to 236 is the PX domain; that stretch reads QRLLFEVTSA…DFFVLPELRR (118 aa). 4 residues coordinate a 1,2-diacyl-sn-glycero-3-phospho-(1D-myo-inositol-3-phosphate): Arg161, Ser163, Lys188, and Arg202.

It belongs to the sorting nexin family. Monomer.

Its subcellular location is the cytoplasmic vesicle membrane. The protein localises to the early endosome membrane. Binds to membranes enriched in phosphatidylinositol 3-phosphate (PtdIns(P3)) and phosphatidylinositol 4,5-bisphosphate. May be involved in several stages of intracellular trafficking. The sequence is that of Sorting nexin-21 from Mus musculus (Mouse).